We begin with the raw amino-acid sequence, 148 residues long: uncharacterized protein (148 aa).

The helical transmembrane segment at 22–40 threads the bilayer; sequence YFLSLTVVISIIHLFTTCV. The tract at residues 43–141 is histidine-rich; sequence HNHSTHFPYL…YYPISRHYLH (99 aa).

Its subcellular location is the host membrane. This is an uncharacterized protein from African swine fever virus (strain Badajoz 1971 Vero-adapted) (Ba71V).